The primary structure comprises 64 residues: Large ribosomal subunit protein bL35 (64 aa).

The interval methionine 1 to histidine 31 is disordered.

It belongs to the bacterial ribosomal protein bL35 family.

The chain is Large ribosomal subunit protein bL35 from Paenarthrobacter aurescens (strain TC1).